We begin with the raw amino-acid sequence, 509 residues long: Glycerol kinase (509 aa).

T17 contributes to the ADP binding site. ATP is bound by residues T17, T18, and S19. Position 17 (T17) interacts with sn-glycerol 3-phosphate. An ADP-binding site is contributed by R21. 4 residues coordinate sn-glycerol 3-phosphate: R87, E88, Y139, and D256. Glycerol is bound by residues R87, E88, Y139, D256, and Q257. ADP-binding residues include T278 and G322. The ATP site is built by T278, G322, Q326, and A423. ADP-binding residues include A423 and N427.

This sequence belongs to the FGGY kinase family.

The enzyme catalyses glycerol + ATP = sn-glycerol 3-phosphate + ADP + H(+). It functions in the pathway polyol metabolism; glycerol degradation via glycerol kinase pathway; sn-glycerol 3-phosphate from glycerol: step 1/1. Inhibited by fructose 1,6-bisphosphate (FBP). Key enzyme in the regulation of glycerol uptake and metabolism. Catalyzes the phosphorylation of glycerol to yield sn-glycerol 3-phosphate. The chain is Glycerol kinase from Corynebacterium glutamicum (strain R).